The following is a 123-amino-acid chain: Large ribosomal subunit protein uL14 (123 aa).

Belongs to the universal ribosomal protein uL14 family. Part of the 50S ribosomal subunit. Forms a cluster with proteins L3 and L19. In the 70S ribosome, L14 and L19 interact and together make contacts with the 16S rRNA in bridges B5 and B8.

Its function is as follows. Binds to 23S rRNA. Forms part of two intersubunit bridges in the 70S ribosome. The chain is Large ribosomal subunit protein uL14 from Escherichia coli O139:H28 (strain E24377A / ETEC).